Reading from the N-terminus, the 367-residue chain is Probable cysteine protease RD19D (367 aa).

The signal sequence occupies residues 1 to 22 (MVAKALAQLITCIILFCHVVAS). Positions 23–136 (VEDLTIRQVT…AEAPMVEVDG (114 aa)) are cleaved as a propeptide — activation peptide. Residue Asn61 is glycosylated (N-linked (GlcNAc...) asparagine). 2 cysteine pairs are disulfide-bonded: Cys158–Cys208 and Cys192–Cys241. Cys161 is an active-site residue. Asn254 carries N-linked (GlcNAc...) asparagine glycosylation. Cys297 and Cys352 form a disulfide bridge. Catalysis depends on residues His304 and Asn331.

The protein belongs to the peptidase C1 family.

Probable thiol protease. This chain is Probable cysteine protease RD19D, found in Arabidopsis thaliana (Mouse-ear cress).